We begin with the raw amino-acid sequence, 648 residues long: Cysteine-rich receptor-like protein kinase 38 (648 aa).

A signal peptide spans 1-25 (MKNSAAIFLTSSLILLLQTLHGVKA). Gnk2-homologous domains are found at residues 26–127 (GFIC…DQST) and 140–247 (PSPV…FYPF). Residues 26 to 278 (GFICVGSSFP…EAISITRLKG (253 aa)) lie on the Extracellular side of the membrane. Residues Asn-37, Asn-63, Asn-151, Asn-174, and Asn-253 are each glycosylated (N-linked (GlcNAc...) asparagine). Residues 279 to 299 (GIIAIFVVPIVINLLVFIGLI) traverse the membrane as a helical segment. Over 300–648 (RAYTRIRKSY…ELSITELSPR (349 aa)) the chain is Cytoplasmic. One can recognise a Protein kinase domain in the interval 339-611 (FSFENKIGQG…VIQWLGSETI (273 aa)). Residues 345 to 353 (IGQGGFGSV) and Lys-367 each bind ATP. Tyr-412 bears the Phosphotyrosine mark. The Proton acceptor role is filled by Asp-464. Ser-468 is subject to Phosphoserine. Position 504 is a phosphothreonine (Thr-504). Tyr-512 is subject to Phosphotyrosine.

It belongs to the protein kinase superfamily. Ser/Thr protein kinase family. CRK subfamily.

The protein localises to the membrane. The enzyme catalyses L-seryl-[protein] + ATP = O-phospho-L-seryl-[protein] + ADP + H(+). It carries out the reaction L-threonyl-[protein] + ATP = O-phospho-L-threonyl-[protein] + ADP + H(+). The sequence is that of Cysteine-rich receptor-like protein kinase 38 (CRK38) from Arabidopsis thaliana (Mouse-ear cress).